Reading from the N-terminus, the 772-residue chain is Nudix hydrolase 3 (772 aa).

Positions 1–14 (MAEEHFDVLTKSGE) are enriched in basic and acidic residues. The disordered stretch occupies residues 1–25 (MAEEHFDVLTKSGEKTGVSKPRGEV). The Nudix hydrolase domain maps to 30-172 (DYHRAVHVWI…DPAYVPYDVN (143 aa)). The Nudix box signature appears at 69–90 (GHISAGDTSLLSAQRELEEELG). Mg(2+) contacts are provided by E84 and E88.

Belongs to the Nudix hydrolase family. It depends on Mg(2+) as a cofactor. Mn(2+) serves as cofactor. As to expression, expressed in roots, stems and, at lower level, leaves.

Probably mediates the hydrolysis of some nucleoside diphosphate derivatives. This Arabidopsis thaliana (Mouse-ear cress) protein is Nudix hydrolase 3 (NUDT3).